A 65-amino-acid polypeptide reads, in one-letter code: Large ribosomal subunit protein uL30 (65 aa).

This sequence belongs to the universal ribosomal protein uL30 family. In terms of assembly, part of the 50S ribosomal subunit.

This chain is Large ribosomal subunit protein uL30, found in Mesorhizobium japonicum (strain LMG 29417 / CECT 9101 / MAFF 303099) (Mesorhizobium loti (strain MAFF 303099)).